The following is a 287-amino-acid chain: MNTVASLFAILPYPQIDPIALSIGPVAIRWYGLAYVTGILIGWWLARRMIANLSLWPGNTTPITEKHLDDFLVWAAIGIVLGGRIGYILFYDLQPVLDNPLVALEIWRGGMSFHGGLTGATLAMIVFARRNGLPVWMLFDLVACVAPIGLFFGRIANFINGELWGRVSDVAWAMQFPTGGPFTRHPSQLYEAALEGLVLFVLLQVLARQFHALKTSGVISGVFICGYALARIFVEFFREPDEQLGYLVGGWLTMGMLLSLPMLALGLWAIWRARRAGRSQEPSGLKG.

A run of 4 helical transmembrane segments spans residues 26–46 (VAIRWYGLAYVTGILIGWWLA), 71–91 (FLVWAAIGIVLGGRIGYILFY), 106–126 (IWRGGMSFHGGLTGATLAMIV), and 132–152 (GLPVWMLFDLVACVAPIGLFF). Arg154 contacts a 1,2-diacyl-sn-glycero-3-phospho-(1'-sn-glycerol). Helical transmembrane passes span 187 to 207 (SQLYEAALEGLVLFVLLQVLA), 217 to 237 (GVISGVFICGYALARIFVEFF), and 251 to 271 (WLTMGMLLSLPMLALGLWAIW).

Belongs to the Lgt family.

It is found in the cell inner membrane. The enzyme catalyses L-cysteinyl-[prolipoprotein] + a 1,2-diacyl-sn-glycero-3-phospho-(1'-sn-glycerol) = an S-1,2-diacyl-sn-glyceryl-L-cysteinyl-[prolipoprotein] + sn-glycerol 1-phosphate + H(+). Its pathway is protein modification; lipoprotein biosynthesis (diacylglyceryl transfer). In terms of biological role, catalyzes the transfer of the diacylglyceryl group from phosphatidylglycerol to the sulfhydryl group of the N-terminal cysteine of a prolipoprotein, the first step in the formation of mature lipoproteins. The sequence is that of Phosphatidylglycerol--prolipoprotein diacylglyceryl transferase from Allorhizobium ampelinum (strain ATCC BAA-846 / DSM 112012 / S4) (Agrobacterium vitis (strain S4)).